We begin with the raw amino-acid sequence, 209 residues long: Octanoyltransferase (209 aa).

The BPL/LPL catalytic domain maps to 30-209; it reads DNEPEIVYLV…IQTEFNKIFK (180 aa). Residues 69–76, 143–145, and 156–158 contribute to the substrate site; these read RGGKFTFH, AIG, and GIA. The Acyl-thioester intermediate role is filled by cysteine 174.

This sequence belongs to the LipB family.

The protein resides in the cytoplasm. The enzyme catalyses octanoyl-[ACP] + L-lysyl-[protein] = N(6)-octanoyl-L-lysyl-[protein] + holo-[ACP] + H(+). It participates in protein modification; protein lipoylation via endogenous pathway; protein N(6)-(lipoyl)lysine from octanoyl-[acyl-carrier-protein]: step 1/2. Functionally, catalyzes the transfer of endogenously produced octanoic acid from octanoyl-acyl-carrier-protein onto the lipoyl domains of lipoate-dependent enzymes. Lipoyl-ACP can also act as a substrate although octanoyl-ACP is likely to be the physiological substrate. The protein is Octanoyltransferase of Rickettsia prowazekii (strain Madrid E).